A 104-amino-acid polypeptide reads, in one-letter code: MNQYFTYILQCSDKTLYCGYTTDLEKRLATHNSGKGAKYTKTRLPVKLLASVDFDNKNDAMSCEWWFKHKLVRKQKLSLIKNDLIKEKFIEYLELKQKKNIHLK.

The GIY-YIG domain maps to 2–79; it reads NQYFTYILQC…KLVRKQKLSL (78 aa).

The protein belongs to the UPF0213 family.

This chain is UPF0213 protein YsiG (ysiG), found in Lactococcus lactis subsp. lactis (strain IL1403) (Streptococcus lactis).